The primary structure comprises 194 residues: Interferon alpha (194 aa).

A signal peptide spans 1 to 23 (MALPSSFLVALVALGCNSVCSLG). Intrachain disulfides connect Cys-24/Cys-123 and Cys-52/Cys-166. Residue Asn-102 is glycosylated (N-linked (GlcNAc...) asparagine).

It belongs to the alpha/beta interferon family.

The protein localises to the secreted. Functionally, produced by macrophages, IFN-alpha have antiviral activities. Interferon stimulates the production of two enzymes: a protein kinase and an oligoadenylate synthetase. In Felis catus (Cat), this protein is Interferon alpha.